The following is a 503-amino-acid chain: Major facilitator superfamily domain-containing protein 4A (503 aa).

12 consecutive transmembrane segments (helical) span residues 19–39 (LTYWSVFFSFGLCIAFLGPTL), 53–73 (ITWVFFAQQFCLLVGSTLGGV), 82–102 (LFLLFLSSLTISVVFVIIPFC), 105–125 (VGVLALVMAIAGLAMGCIDTI), 139–159 (AIFLQVLHFFVGFGALLSPLI), 214–234 (YAFWIMAAINLPVPVAVFYLI), 289–309 (IWNAPFTFFAIHMCAAVTLFM), 338–358 (GYLPSLFWAFITLGRLISIPV), 366–386 (SMLFINLIGVTATFLFLLLSQ), 392–412 (MFVGTALLGLWLSSVFPSMLA), 427–447 (VLVTGAGMGEMVLQILVGSVM), and 455–475 (FLVCGICLSSLAFTLYAVLLV). Positions 484 to 503 (SEDSACKPPGLDGEATSYQS) are disordered.

The protein belongs to the major facilitator superfamily.

It is found in the membrane. This chain is Major facilitator superfamily domain-containing protein 4A (mfsd4a), found in Xenopus tropicalis (Western clawed frog).